The chain runs to 63 residues: UPF0391 membrane protein lpg2415 (63 aa).

2 helical membrane-spanning segments follow: residues 4–24 (WALIFLIVAIVAGLFGFRGVA) and 33–53 (VLFFLFIVMFIVLLVFSLLGG).

This sequence belongs to the UPF0391 family.

It localises to the cell membrane. The chain is UPF0391 membrane protein lpg2415 from Legionella pneumophila subsp. pneumophila (strain Philadelphia 1 / ATCC 33152 / DSM 7513).